The chain runs to 328 residues: Phosphate acyltransferase (328 aa).

Belongs to the PlsX family. As to quaternary structure, homodimer. Probably interacts with PlsY.

Its subcellular location is the cytoplasm. The enzyme catalyses a fatty acyl-[ACP] + phosphate = an acyl phosphate + holo-[ACP]. It participates in lipid metabolism; phospholipid metabolism. Its function is as follows. Catalyzes the reversible formation of acyl-phosphate (acyl-PO(4)) from acyl-[acyl-carrier-protein] (acyl-ACP). This enzyme utilizes acyl-ACP as fatty acyl donor, but not acyl-CoA. This is Phosphate acyltransferase from Campylobacter jejuni subsp. jejuni serotype O:23/36 (strain 81-176).